The following is a 531-amino-acid chain: Multidrug resistance protein fnx1 (531 aa).

The Cytoplasmic portion of the chain corresponds to 1–30 (MVDQVNLATEQTSLLYPEVSRKKEELSVNK). A helical membrane pass occupies residues 31–51 (WTILPALWVGGFLSALDMTIV). At 52-225 (ASLYPVIGSE…NASLLSRIDY (174 aa)) the chain is on the lumenal side. The chain crosses the membrane as a helical span at residues 226 to 246 (LGSFLLVTGITALVVTFNMGG). At 247-252 (DAFPWV) the chain is on the cytoplasmic side. The helical transmembrane segment at 253–273 (SPVIITLLVSSVLILFAFYWV) threads the bilayer. At 274 to 297 (EKNIAVEPIAPVEILSQPTPLNVC) the chain is on the lumenal side. Residues 298-318 (LGNFFNAFCSFVIVYELPLFF) traverse the membrane as a helical segment. The Cytoplasmic segment spans residues 319 to 360 (ETTLLMPSSEAGVRIFPYVISTSVGSLCSGLYMKKTGRYRNL). The helical transmembrane segment at 361 to 381 (VIAGFFFMLMGIVSFAVLTSF) threads the bilayer. The Lumenal portion of the chain corresponds to 382 to 385 (GHRT). Residues 386–406 (PLILISLCLAMTGCSYGMNLT) traverse the membrane as a helical segment. At 407-496 (STLIAIISSL…QKLVIKSYAT (90 aa)) the chain is on the cytoplasmic side. The helical transmembrane segment at 497–517 (AFTWTFALVAIIAFAGFWCSL) threads the bilayer. Over 518–531 (RIKQFYLHTSVDRS) the chain is Lumenal.

Belongs to the major facilitator superfamily.

It is found in the vacuole membrane. Functionally, efflux transporter. Confers resistance to a variety of toxic compounds. The protein is Multidrug resistance protein fnx1 (fnx1) of Schizosaccharomyces pombe (strain 972 / ATCC 24843) (Fission yeast).